The following is a 202-amino-acid chain: Small ribosomal subunit protein uS4c (202 aa).

Positions 18-45 are disordered; that stretch reads LPGLTRKMAKRKSPPGQHGAASKKPSQY. The region spanning 90–152 is the S4 RNA-binding domain; that stretch reads MRLDTTIFRL…SRSRKLIEGY (63 aa).

The protein belongs to the universal ribosomal protein uS4 family. As to quaternary structure, part of the 30S ribosomal subunit. Contacts protein S5. The interaction surface between S4 and S5 is involved in control of translational fidelity.

It is found in the plastid. The protein localises to the chloroplast. Functionally, one of the primary rRNA binding proteins, it binds directly to 16S rRNA where it nucleates assembly of the body of the 30S subunit. In terms of biological role, with S5 and S12 plays an important role in translational accuracy. This is Small ribosomal subunit protein uS4c (rps4) from Nephroselmis olivacea (Green alga).